The primary structure comprises 476 residues: Protein transport protein Sec61 subunit alpha (476 aa).

Residues 2–33 lie on the Cytoplasmic side of the membrane; it reads GIKFLEFIKPFCAVLPEIQKPERKIQFREKVL. A helical membrane pass occupies residues 34-53; the sequence is WTAITLFIFLVCCQIPLFGI. Residues 54–76 lie on the Lumenal side of the membrane; it reads MSSDSADPFYWMRVILASNRGTL. Residues 77–96 traverse the membrane as a helical segment; it reads MELGIAPIVTSGLIMQLLAG. The Cytoplasmic portion of the chain corresponds to 97–117; that stretch reads AKIIEVGDTPKDRALFNGAQK. Residues 118–138 form a helical membrane-spanning segment; it reads LFGMIITIGQAIVYVMTGMYG. Over 139–144 the chain is Lumenal; it reads DPSEMG. The helical transmembrane segment at 145–165 threads the bilayer; it reads AGICLLIIIQLFVAGLIVLLL. Topologically, residues 166–172 are cytoplasmic; that stretch reads DELLQKG. Residues 173–193 form a helical membrane-spanning segment; the sequence is YGLGSGISLFIATNICETIVW. At 194 to 240 the chain is on the lumenal side; the sequence is KAFGPTTVNTGRGTEFEGAIIALFHLLATRTDKVRALREAFYRQNLP. The helical transmembrane segment at 241-261 threads the bilayer; that stretch reads NLMNLIATVFVFAVVIYFQGF. Topologically, residues 262–288 are cytoplasmic; sequence RVDLPIKSARYRGQYNTYPIKLFYTSN. A helical membrane pass occupies residues 289–309; that stretch reads IPIILQSALVSNLYVISQMLS. Over 310–354 the chain is Lumenal; sequence TRFSGNFLVNLLGTWSDATTSGPARAYPVAGLCYYLSPPESFGSV. A helical transmembrane segment spans residues 355–375; the sequence is LDDPVHAVIYIVFMLGSCAFF. The Cytoplasmic portion of the chain corresponds to 376 to 420; it reads SKTWIEVSGSSAKDVAKQLKEQQMVMRGHRETSMVHELNRYIPTA. The chain crosses the membrane as a helical span at residues 421–441; that stretch reads AAFGGLCIGGLSVMADFLGAI. Residues 442–445 lie on the Lumenal side of the membrane; it reads GSGT. A helical transmembrane segment spans residues 446-462; sequence GILLAVTIIYQYFEIFV. At 463 to 476 the chain is on the cytoplasmic side; it reads KEQSEVGSMGALLF.

It belongs to the SecY/SEC61-alpha family. As to quaternary structure, the SEC61 channel-forming translocon complex consists of channel-forming core components SEC61A1, SEC61B and SEC61G and different auxiliary components such as SEC62 and SEC63. The SEC61 channel associates with the multi-pass translocon (MPT) complex.

It is found in the endoplasmic reticulum membrane. Functionally, component of SEC61 channel-forming translocon complex that mediates transport of signal peptide-containing precursor polypeptides across the endoplasmic reticulum (ER). Forms a ribosome receptor and a gated pore in the ER membrane, both functions required for cotranslational translocation of nascent polypeptides. May cooperate with auxiliary protein SEC62, SEC63 and HSPA5/BiP to enable post-translational transport of small presecretory proteins. The SEC61 channel is also involved in ER membrane insertion of transmembrane proteins: it mediates membrane insertion of the first few transmembrane segments of proteins, while insertion of subsequent transmembrane regions of multi-pass membrane proteins is mediated by the multi-pass translocon (MPT) complex. The chain is Protein transport protein Sec61 subunit alpha (sec61a) from Bovichtus variegatus (Thornfish).